The sequence spans 269 residues: uncharacterized protein (269 aa).

5 consecutive transmembrane segments (helical) span residues 65–85 (FSLF…LFVM), 156–176 (VTSV…ISMV), 182–202 (YTRI…WLGF), 206–226 (MMSF…NDFW), and 242–262 (TLSA…EFSF). The short motif at 266–269 (KKKW) is the Di-lysine motif element.

It belongs to the SURF4 family.

The protein resides in the membrane. This is an uncharacterized protein from Caenorhabditis elegans.